Here is a 3019-residue protein sequence, read N- to C-terminus: Genome polyprotein (3019 aa).

Serine 2 bears the N-acetylserine; by host mark. An interaction with STAT1 region spans residues 2 to 23 (STLPKPQRITKRNINRRPQDVK). Residues 2-58 (STLPKPQRITKRNINRRPQDVKFPGGGQIVGGVYVLPRRGPKLGVRAVRKTSERSQP) are interaction with EIF2AK2/PKR. The segment at 2–59 (STLPKPQRITKRNINRRPQDVKFPGGGQIVGGVYVLPRRGPKLGVRAVRKTSERSQPR) is interaction with DDX3X. The disordered stretch occupies residues 2–75 (STLPKPQRIT…PRARRTEGRS (74 aa)). At 2-168 (STLPKPQRIT…EDGINFATGN (167 aa)) the chain is on the cytoplasmic side. 2 consecutive short sequence motifs (nuclear localization signal) follow at residues 5-13 (PKPQRITKR) and 38-43 (PRRGPK). Serine 53 carries the phosphoserine; by host modification. 2 short sequence motifs (nuclear localization signal) span residues 58 to 64 (PRSRRQP) and 66 to 71 (PRARRT). The segment covering 58–68 (PRSRRQPIPRA) has biased composition (basic residues). Serine 99 and serine 116 each carry phosphoserine; by host. The segment at 112–152 (PRRRSRNLGKVIDTLTCGFADLMGYIPLVGAPVGGVARALA) is important for endoplasmic reticulum and mitochondrial localization. The interaction with APOA2 stretch occupies residues 122–173 (VIDTLTCGFADLMGYIPLVGAPVGGVARALAHGVRALEDGINFATGNLPGCS). An important for lipid droplets localization region spans residues 164 to 167 (FATG). Residues 169–189 (LPGCSFSIFLLALLSCLLTPT) traverse the membrane as a helical segment. Positions 178–191 (LLALLSCLLTPTAG) are cleaved as a propeptide — ER anchor for the core protein, removed in mature form by host signal peptidase. Residues 190–358 (AGLEYRNASG…IGAHWGVMAG (169 aa)) are Lumenal-facing. Residues asparagine 196, asparagine 209, and asparagine 234 are each glycosylated (N-linked (GlcNAc...) asparagine; by host). The interval 265-296 (MVGAATLCSALYVGDLCGALFLVGQGFSWRHR) is important for fusion. Residue asparagine 305 is glycosylated (N-linked (GlcNAc...) asparagine; by host). Residues 359–379 (VAYYSMQGNWAKVFLVLCLFS) form a helical membrane-spanning segment. Residues 380 to 730 (GVDASTTITG…WEFVILIFLL (351 aa)) lie on the Lumenal side of the membrane. Residues 385–412 (TTITGGVAASGAFTITSLFSTGAKQPLH) form an HVR1 region. N-linked (GlcNAc...) (high mannose) asparagine; by host glycosylation is found at asparagine 417, asparagine 423, and asparagine 430. 4 disulfide bridges follow: cysteine 429–cysteine 553, cysteine 452–cysteine 459, cysteine 487–cysteine 495, and cysteine 504–cysteine 509. N-linked (GlcNAc...) asparagine; by host glycosylation is present at asparagine 448. Residues 475–479 (ANISG) are HVR2. Asparagine 476 is a glycosylation site (N-linked (GlcNAc...) asparagine; by host). The tract at residues 481-494 (SSEKPYCWHYAPRP) is CD81-binding 1. Residue asparagine 533 is glycosylated (N-linked (GlcNAc...) asparagine; by host). Positions 545 to 552 (PPTEPWFG) are CD81-binding 2. Asparagine 557 carries an N-linked (GlcNAc...) asparagine; by host glycan. 4 disulfides stabilise this stretch: cysteine 565/cysteine 570, cysteine 586/cysteine 590, cysteine 602/cysteine 625, and cysteine 612/cysteine 649. Residues asparagine 628 and asparagine 650 are each glycosylated (N-linked (GlcNAc...) (high mannose) asparagine; by host). Cysteine 657 and cysteine 682 are disulfide-bonded. A PKR/eIF2-alpha phosphorylation homology domain (PePHD) region spans residues 665–676 (SEMYPLLHSTTE). The helical transmembrane segment at 731-751 (LADARVCVVLWMMMLISQAEA) threads the bilayer. Topologically, residues 752 to 762 (ALENLIVLNAI) are lumenal. The helical transmembrane segment at 763–783 (SAAGTHGIWWSLVAFCVAWHV) threads the bilayer. Topologically, residues 784–786 (RGR) are cytoplasmic. Residues 787–808 (IFPIAVYSIVGLWPLLLLVLML) traverse the membrane as a helical segment. Residues 809–818 (PYRAYAWTGT) lie on the Lumenal side of the membrane. Residues 819 to 839 (DTSTLGAGVLSLFALFTLSPW) traverse the membrane as a helical segment. The Cytoplasmic segment spans residues 840-843 (YKHW). Residues 844 to 863 (IARLIWWNQYTIARCEAALQ) form a helical membrane-spanning segment. Over 864 to 886 (IWVPPLLARGARDGIILLAGLFY) the chain is Lumenal. The chain crosses the membrane as a helical span at residues 887 to 907 (PALVFDITKLLLAILGPLYIL). Residues 908–1031 (QASLVRVPYF…DYRSMGWRLL (124 aa)) form the Peptidase C18 domain. At 908-1662 (QASLVRVPYF…CMAADLEVAT (755 aa)) the chain is on the cytoplasmic side. The interval 909–1211 (ASLVRVPYFV…PVESLSAQTR (303 aa)) is protease NS2-3. Cysteine 927 is lipidated: S-palmitoyl cysteine; by host. The segment at 934–954 (TGGKYVQMVLLALARGFNTYL) is interaction with host SCPS1. Active-site for protease NS2 activity; shared with dimeric partner residues include histidine 957, glutamate 977, and cysteine 998. Positions 1032 to 1213 (APITAHAQQT…ESLSAQTRSP (182 aa)) constitute a Peptidase S29 domain. Residues histidine 1088 and aspartate 1112 each act as charge relay system; for serine protease NS3 activity in the active site. Residues cysteine 1128 and cysteine 1130 each coordinate Zn(2+). The active-site Charge relay system; for serine protease NS3 activity is serine 1170. The Zn(2+) site is built by cysteine 1176 and histidine 1180. Position 1235 to 1242 (1235 to 1242 (APTGSGES)) interacts with ATP. Serine 1242 and glutamate 1322 together coordinate Mg(2+). The DECH box signature appears at 1321-1324 (DECH). The region spanning 1366 to 1543 (NIEEVALTGE…ELTPSETTVR (178 aa)) is the Helicase C-terminal domain. Positions 1482 to 1505 (VPQDAVSRSQRRGRTGRGKSGTYR) are disordered. An RNA-binding region spans residues 1491–1503 (QRRGRTGRGKSGT). Residues 1663-1683 (SAWVLLGGVMAALTAYCLSVG) traverse the membrane as a helical segment. Residues 1684–1695 (SVVIVGHLVLGG) form an NS3-binding region. At 1684–1810 (SVVIVGHLVL…SVTSPLTTNQ (127 aa)) the chain is on the cytoplasmic side. The chain crosses the membrane as a helical span at residues 1811–1829 (TLLFNIMGGWVASNLAPPP). Over 1830 to 1833 (ASTA) the chain is Lumenal. Residues 1834-1854 (FVVSGLAGAAVGSIGLGKVLL) form a helical membrane-spanning segment. Aspartate 1855 is a topological domain (cytoplasmic). Residues 1856–1876 (ILAGYGAGVAGALVAFKIMGG) form a helical membrane-spanning segment. The Lumenal segment spans residues 1877–1886 (EMPSTEDMVN). Residues 1887-1907 (LLPAILSPGALVVGVICAAIL) traverse the membrane as a helical segment. Residues 1908–1977 (RRHVGPGEGA…WINEDYPTPC (70 aa)) are Cytoplasmic-facing. A lipid anchor (S-palmitoyl cysteine; by host) is attached at cysteine 1977. Residues 1978–2007 (DGNWLYDIWNWVCTVLADFKLWLGAKILPK) lie within the membrane without spanning it. Topologically, residues 2008–2998 (MPGIPFLSCQ…YHSVSRARSR (991 aa)) are cytoplasmic. Residues cysteine 2016, cysteine 2034, cysteine 2036, and cysteine 2057 each coordinate Zn(2+). Residues 2125-2213 (EFFTELDGVR…ASSSASQLSA (89 aa)) form an FKBP8-binding region. Positions 2125–2337 (EFFTELDGVR…PVPPPRRKRT (213 aa)) are transcriptional activation. An interaction with non-structural protein 4A region spans residues 2140-2144 (PVCRP). Residues 2191–2225 (AKRRLDRGSPPSLASSSASQLSAPSRKATCTTHGR) are disordered. The tract at residues 2194–2446 (RLDRGSPPSL…ALITPCAAEE (253 aa)) is interaction with host SKP2. Serine 2199, serine 2202, serine 2206, serine 2209, serine 2212, and serine 2215 each carry phosphoserine; by host. The span at 2199 to 2215 (SPPSLASSSASQLSAPS) shows a compositional bias: low complexity. The ISDR stretch occupies residues 2215 to 2254 (SRKATCTTHGRHPDAELITANLLWRQEMGSNITRVESESK). An interaction with EIF2AK2/PKR region spans residues 2215-2280 (SRKATCTTHG…DELSVAAECF (66 aa)). Residues 2254-2311 (KVVILDSFEPLRACDDEDELSVAAECFKKPPKYPPALPIWARPDYNPPLVEPWKDPDY) form an NS4B-binding region. Positions 2304–2382 (EPWKDPDYVP…GTQSGSLTGP (79 aa)) are V3. The short motif at 2327–2330 (PPVP) is the SH3-binding element. The Nuclear localization signal motif lies at 2332–2340 (PRRKRTIVL). A Glycyl lysine isopeptide (Lys-Gly) (interchain with G-Cter in ubiquitin) cross-link involves residue lysine 2355. Positions 2356-2417 (SFPQPTCSAE…PDLSSGSWST (62 aa)) are disordered. The segment covering 2369–2381 (TSGVGTQSGSLTG) has biased composition (polar residues). 2 positions are modified to phosphoserine; by host: serine 2457 and serine 2470. Positions 2642 to 2760 (PLGFSYDTRC…IAESAGIDED (119 aa)) constitute a RdRp catalytic domain. Residues aspartate 2648, aspartate 2746, and aspartate 2747 each contribute to the Mg(2+) site. A helical membrane pass occupies residues 2999-3019 (HLLLGLLLLTVGVGIFLLPAR).

The protein belongs to the hepacivirus polyprotein family. Homooligomer. Interacts with E1 (via C-terminus). Interacts with the non-structural protein 5A. Interacts (via N-terminus) with host STAT1 (via SH2 domain); this interaction results in decreased STAT1 phosphorylation and ubiquitin-mediated proteasome-dependent STAT1 degradation, leading to decreased IFN-stimulated gene transcription. Interacts with host STAT3; this interaction constitutively activates STAT3. Interacts with host LTBR receptor. Interacts with host TNFRSF1A receptor and possibly induces apoptosis. Interacts with host HNRPK. Interacts with host YWHAE. Interacts with host UBE3A/E6AP. Interacts with host DDX3X. Interacts with host APOA2. Interacts with host RXRA protein. Interacts with host SP110 isoform 3/Sp110b; this interaction sequesters the transcriptional corepressor SP110 away from the nucleus. Interacts with host CREB3 nuclear transcription protein; this interaction triggers cell transformation. Interacts with host ACY3. Interacts with host C1QR1. Interacts with host RBM24; this interaction, which enhances the interaction of the mature core protein with 5'-UTR, may inhibit viral translation and favor replication. Interacts with host EIF2AK2/PKR; this interaction induces the autophosphorylation of EIF2AK2. Part of the viral assembly initiation complex composed of NS2, E1, E2, NS3, NS4A, NS5A and the mature core protein. As to quaternary structure, forms a heterodimer with envelope glycoprotein E2. Interacts with mature core protein. Interacts with protease NS2. The heterodimer E1/E2 interacts with host CLDN1; this interaction plays a role in viral entry into host cell. Interacts with host SPSB2 (via C-terminus). Part of the viral assembly initiation complex composed of NS2, E1, E2, NS3, NS4A, NS5A and the mature core protein. Interacts with host NEURL3; this interaction prevents E1 binding to glycoprotein E2. In terms of assembly, forms a heterodimer with envelope glycoprotein E1. Interacts with host CD81 and SCARB1 receptors; these interactions play a role in viral entry into host cell. Interacts with host EIF2AK2/PKR; this interaction inhibits EIF2AK2 and probably allows the virus to evade the innate immune response. Interacts with host CD209/DC-SIGN and CLEC4M/DC-SIGNR. Interact with host SPCS1; this interaction is essential for viral particle assembly. Interacts with protease NS2. The heterodimer E1/E2 interacts with host CLDN1; this interaction plays a role in viral entry into host cell. Part of the viral assembly initiation complex composed of NS2, E1, E2, NS3, NS4A, NS5A and the mature core protein. Interacts with host SLC3A2/4F2hc; the interaction may facilitate viral entry into host cell. Interacts with human PLSCR1. Homohexamer. Homoheptamer. Interacts with protease NS2. As to quaternary structure, homodimer. Interacts with host SPCS1; this interaction is essential for viral particle assembly. Interacts with envelope glycoprotein E1. Interacts with envelope glycoprotein E2. Interacts with viroporin p7. Interacts with serine protease/helicase NS3. Part of the replication complex composed of NS2, NS3, NS4A, NS4B, NS5A and the RNA-directed RNA polymerase embedded in an ER-derived membranous web. Part of the viral assembly initiation complex composed of NS2, E1, E2, NS3, NS4A, NS5A and the mature core protein. In terms of assembly, interacts with protease NS2. Interacts with non-structural protein 4A; this interaction stabilizes the folding of NS3 serine protease. NS3-NS4A interaction is essential for NS3 activation and allows membrane anchorage of the latter. NS3/NS4A complex also prevents phosphorylation of host IRF3, thus preventing the establishment of dsRNA induced antiviral state. Interacts with host MAVS; this interaction leads to the cleavage and inhibition of host MAVS. Interacts with host TICAM1; this interaction leads to the cleavage and inhibition of host TICAM1. Interacts with host TANK-binding kinase/TBK1; this interaction results in the inhibition of the association between TBK1 and IRF3, which leads to the inhibition of IRF3 activation. Interacts with host RBM24. Part of the replication complex composed of NS2, NS3, NS4A, NS4B, NS5A and the RNA-directed RNA polymerase embedded in an ER-derived membranous web. Part of the viral assembly initiation complex composed of NS2, E1, E2, NS3, NS4A, NS5A and the mature core protein. Interacts with NS3 serine protease; this interaction stabilizes the folding of NS3 serine protease. NS3-NS4A interaction is essential for NS3 activation and allows membrane anchorage of the latter. Interacts with non-structural protein 5A (via N-terminus). Part of the replication complex composed of NS2, NS3, NS4A, NS4B, NS5A and the RNA-directed RNA polymerase embedded in an ER-derived membranous web. Part of the viral assembly initiation complex composed of NS2, E1, E2, NS3, NS4A, NS5A and the mature core protein. As to quaternary structure, homomultimer. Interacts with non-structural protein NS5A. Interacts with host PLA2G4C; this interaction likely initiates the recruitment of replication complexes to lipid droplets. Interacts with host STING; this interaction disrupts the interaction between STING and TBK1 thereby suppressing the interferon signaling. Part of the replication complex composed of NS2, NS3, NS4A, NS4B, NS5A and the RNA-directed RNA polymerase embedded in an ER-derived membranous web. In terms of assembly, monomer. Homodimer; dimerization is required for RNA-binding. Interacts with the mature core protein. Interacts (via N-terminus) with non-structural protein 4A. Interacts with non-structural protein 4B. Interacts (via region D2) with RNA-directed RNA polymerase. Part of the viral assembly initiation complex composed of NS2, E1, E2, NS3, NS4A, NS5A and the mature core protein. Part of the replication complex composed of NS2, NS3, NS4A, NS4B, NS5A and the RNA-directed RNA polymerase embedded in an ER-derived membranous web. Interacts with host GRB2. Interacts with host BIN1. Interacts with host PIK3R1. Interacts with host SRCAP. Interacts with host FKBP8. Interacts (via C-terminus) with host VAPB (via MSP domain). Interacts with host EIF2AK2/PKR; this interaction leads to disruption of EIF2AK2 dimerization by NS5A and probably allows the virus to evade the innate immune response. Interacts (via N-terminus) with host PACSIN2 (via N-terminus); this interaction attenuates protein kinase C alpha-mediated phosphorylation of PACSIN2 by disrupting the interaction between PACSIN2 and PRKCA. Interacts (via N-terminus) with host SRC kinase (via SH2 domain). Interacts with most Src-family kinases. Interacts with host IFI27 and SKP2; promotes the ubiquitin-mediated proteasomal degradation of NS5A. Interacts with host GPS2. Interacts with host TNFRSF21; this interaction allows the modulation by the virus of JNK, p38 MAPK, STAT3, and Akt signaling pathways in a DR6-dependent manner. Interacts (via N-terminus) with host CIDEB (via N-terminus); this interaction seems to regulate the association of HCV particles with APOE. Interacts with host CHKA/Choline Kinase-alpha; CHKA bridges host PI4KA and NS5A and potentiates NS5A-stimulated PI4KA activity, which then facilitates the targeting of the ternary complex to the ER for viral replication. Interacts with host SPSB2 (via C-terminus); this interaction targets NS5A for ubiquitination and degradation. Interacts with host RAB18; this interaction may promote the association of NS5A and other replicase components with lipid droplets. Interacts (via region D2) with host PPIA/CYPA; the interaction stimulates RNA-binding ability of NS5A and is dependent on the peptidyl-prolyl cis-trans isomerase activity of PPIA/CYPA. Interacts with host TRIM14; this interaction induces the degradation of NS5A. Homooligomer. Interacts with non-structural protein 5A. Interacts with host VAPB. Interacts with host PRK2/PKN2. Interacts with host HNRNPA1 and SEPT6; these interactions facilitate viral replication. Part of the replication complex composed of NS2, NS3, NS4A, NS4B, NS5A and the RNA-directed RNA polymerase. Zn(2+) serves as cofactor. Requires Mg(2+) as cofactor. In terms of processing, specific enzymatic cleavages in vivo yield mature proteins. The structural proteins, core, E1, E2 and p7 are produced by proteolytic processing by host signal peptidases. The core protein precursor is synthesized as a 23 kDa, which is retained in the ER membrane through the hydrophobic signal peptide. Cleavage by the signal peptidase releases the 21 kDa mature core protein. The cleavage of the core protein precursor occurs between aminoacids 176 and 188 but the exact cleavage site is not known. Some degraded forms of the core protein appear as well during the course of infection. The other proteins (p7, NS2, NS3, NS4A, NS4B, NS5A and NS5B) are cleaved by the viral proteases. Autoprocessing between NS2 and NS3 is mediated by the NS2 cysteine protease catalytic domain and regulated by the NS3 N-terminal domain. Phosphorylated by host PKC and PKA. Post-translationally, ubiquitinated; mediated by UBE3A and leading to core protein subsequent proteasomal degradation. In terms of processing, highly N-glycosylated. Palmitoylation is required for NS2/3 autoprocessing and E2 recruitment to membranes. Post-translationally, palmitoylated. This modification may play a role in its polymerization or in protein-protein interactions. In terms of processing, phosphorylated on serines in a basal form termed p56. p58 is a hyperphosphorylated form of p56. p56 and p58 coexist in the cell in roughly equivalent amounts. Hyperphosphorylation is dependent on the presence of NS4A. Host CSNK1A1/CKI-alpha or RPS6KB1 kinases may be responsible for NS5A phosphorylation. Tyrosine phosphorylation is essential for the interaction with host SRC. Post-translationally, ubiquitinated. Ubiquitination, most probably at Lys-2355, mediated by host IFI27 and SKP2 leads to proteasomal degradation, restricting viral infection. Ubiquitination by host TRIM22 leads to interruption of viral replication. In terms of processing, the N-terminus is phosphorylated by host PRK2/PKN2.

It localises to the host endoplasmic reticulum membrane. The protein resides in the host mitochondrion membrane. It is found in the virion. Its subcellular location is the host cytoplasm. The protein localises to the host nucleus. It localises to the host lipid droplet. The protein resides in the virion membrane. It is found in the host mitochondrion. Its subcellular location is the host cell membrane. The protein localises to the host perinuclear region. The enzyme catalyses Hydrolysis of four peptide bonds in the viral precursor polyprotein, commonly with Asp or Glu in the P6 position, Cys or Thr in P1 and Ser or Ala in P1'.. It catalyses the reaction a ribonucleoside 5'-triphosphate + H2O = a ribonucleoside 5'-diphosphate + phosphate + H(+). The catalysed reaction is ATP + H2O = ADP + phosphate + H(+). It carries out the reaction RNA(n) + a ribonucleoside 5'-triphosphate = RNA(n+1) + diphosphate. With respect to regulation, inhibited by the antiviral drug hexamethylene amiloride. Inhibition by amantadine appears to be genotype-dependent. Also inhibited by long-alkyl-chain iminosugar derivatives. Activity is up-regulated by PRK2/PKN2-mediated phosphorylation. In terms of biological role, packages viral RNA to form a viral nucleocapsid, and promotes virion budding. Participates in the viral particle production as a result of its interaction with the non-structural protein 5A. Binds RNA and may function as a RNA chaperone to induce the RNA structural rearrangements taking place during virus replication. Modulates viral translation initiation by interacting with viral IRES and 40S ribosomal subunit. Affects various cell signaling pathways, host immunity and lipid metabolism. Prevents the establishment of cellular antiviral state by blocking the interferon-alpha/beta (IFN-alpha/beta) and IFN-gamma signaling pathways and by blocking the formation of phosphorylated STAT1 and promoting ubiquitin-mediated proteasome-dependent degradation of STAT1. Activates STAT3 leading to cellular transformation. Regulates the activity of cellular genes, including c-myc and c-fos. May repress the promoter of p53, and sequester CREB3 and SP110 isoform 3/Sp110b in the cytoplasm. Represses cell cycle negative regulating factor CDKN1A, thereby interrupting an important check point of normal cell cycle regulation. Targets transcription factors involved in the regulation of inflammatory responses and in the immune response: suppresses TNF-induced NF-kappa-B activation, and activates AP-1. Binds to dendritic cells (DCs) via C1QR1, resulting in down-regulation of T-lymphocytes proliferation. Alters lipid metabolism by interacting with hepatocellular proteins involved in lipid accumulation and storage. Induces up-regulation of FAS promoter activity, and thereby contributes to the increased triglyceride accumulation in hepatocytes (steatosis). Forms a heterodimer with envelope glycoprotein E2, which mediates virus attachment to the host cell, virion internalization through clathrin-dependent endocytosis and fusion with host membrane. Fusion with the host cell is most likely mediated by both E1 and E2, through conformational rearrangements of the heterodimer required for fusion rather than a classical class II fusion mechanism. E1/E2 heterodimer binds host apolipoproteins such as APOB and ApoE thereby forming a lipo-viro-particle (LVP). APOE associated to the LVP allows the initial virus attachment to cell surface receptors such as the heparan sulfate proteoglycans (HSPGs), syndecan-1 (SDC1), syndecan-1 (SDC2), the low-density lipoprotein receptor (LDLR) and scavenger receptor class B type I (SCARB1). The cholesterol transfer activity of SCARB1 allows E2 exposure and binding of E2 to SCARB1 and the tetraspanin CD81. E1/E2 heterodimer binding on CD81 activates the epithelial growth factor receptor (EGFR) signaling pathway. Diffusion of the complex E1-E2-EGFR-SCARB1-CD81 to the cell lateral membrane allows further interaction with Claudin 1 (CLDN1) and occludin (OCLN) to finally trigger HCV entry. Its function is as follows. Forms a heterodimer with envelope glycoprotein E1, which mediates virus attachment to the host cell, virion internalization through clathrin-dependent endocytosis and fusion with host membrane. Fusion with the host cell is most likely mediated by both E1 and E2, through conformational rearrangements of the heterodimer required for fusion rather than a classical class II fusion mechanism. The interaction between envelope glycoprotein E2 and host apolipoprotein E/APOE allows the proper assembly, maturation and infectivity of the viral particles. This interaction is probably promoted via the up-regulation of cellular autophagy by the virus. E1/E2 heterodimer binds host apolipoproteins such as APOB and APOE thereby forming a lipo-viro-particle (LVP). APOE associated to the LVP allows the initial virus attachment to cell surface receptors such as the heparan sulfate proteoglycans (HSPGs), syndecan-1 (SDC1), syndecan-1 (SDC2), the low-density lipoprotein receptor (LDLR) and scavenger receptor class B type I (SCARB1). The cholesterol transfer activity of SCARB1 allows E2 exposure and binding of E2 to SCARB1 and the tetraspanin CD81. E1/E2 heterodimer binding on CD81 activates the epithelial growth factor receptor (EGFR) signaling pathway. Diffusion of the complex E1-E2-EGFR-SCARB1-CD81 to the cell lateral membrane allows further interaction with Claudin 1 (CLDN1) and occludin (OCLN) to finally trigger HCV entry. Inhibits host EIF2AK2/PKR activation, preventing the establishment of an antiviral state. Viral ligand for CD209/DC-SIGN and CLEC4M/DC-SIGNR, which are respectively found on dendritic cells (DCs), and on liver sinusoidal endothelial cells and macrophage-like cells of lymph node sinuses. These interactions allow the capture of circulating HCV particles by these cells and subsequent facilitated transmission to permissive cells such as hepatocytes and lymphocyte subpopulations. The interaction between E2 and host amino acid transporter complex formed by SLC3A2 and SLC7A5/LAT1 may facilitate viral entry into host cell. Functionally, ion channel protein that acts as a viroporin and plays an essential role in the assembly, envelopment and secretion of viral particles. Regulates the host cell secretory pathway, which induces the intracellular retention of viral glycoproteins and favors assembly of viral particles. Creates a pore in acidic organelles and releases Ca(2+) and H(+) in the cytoplasm of infected cells, leading to a productive viral infection. High levels of cytoplasmic Ca(2+) may trigger membrane trafficking and transport of viral ER-associated proteins to viroplasms, sites of viral genome replication. This ionic imbalance induces the assembly of the inflammasome complex, which triggers the maturation of pro-IL-1beta into IL-1beta through the action of caspase-1. Targets also host mitochondria and induces mitochondrial depolarization. In addition of its role as a viroporin, acts as a lipid raft adhesion factor. In terms of biological role, cysteine protease required for the proteolytic auto-cleavage between the non-structural proteins NS2 and NS3. The N-terminus of NS3 is required for the function of NS2 protease (active region NS2-3). Promotes the initiation of viral particle assembly by mediating the interaction between structural and non-structural proteins. Displays three enzymatic activities: serine protease with a chymotrypsin-like fold, NTPase and RNA helicase. NS3 serine protease, in association with NS4A, is responsible for the cleavages of NS3-NS4A, NS4A-NS4B, NS4B-NS5A and NS5A-NS5B. The NS3/NS4A complex prevents phosphorylation of host IRF3, thus preventing the establishment of dsRNA induced antiviral state. The NS3/NS4A complex induces host amino acid transporter component SLC3A2, thus contributing to HCV propagation. NS3 RNA helicase binds to RNA and unwinds both dsDNA and dsRNA in the 3' to 5' direction, and likely resolves RNA complicated stable secondary structures in the template strand. Binds a single ATP and catalyzes the unzipping of a single base pair of dsRNA. Inhibits host antiviral proteins TBK1 and IRF3 thereby preventing the establishment of an antiviral state. Cleaves host MAVS/CARDIF thereby preventing the establishment of an antiviral state. Cleaves host TICAM1/TRIF, thereby disrupting TLR3 signaling and preventing the establishment of an antiviral state. Its function is as follows. Induces a specific membrane alteration that serves as a scaffold for the virus replication complex. This membrane alteration gives rise to the so-called ER-derived membranous web that contains the replication complex. NS4B self-interaction contributes to its function in membranous web formation. Promotes host TRIF protein degradation in a CASP8-dependent manner thereby inhibiting host TLR3-mediated interferon signaling. Disrupts the interaction between STING and TBK1 contributing to the inhibition of interferon signaling. Functionally, phosphorylated protein that is indispensable for viral replication and assembly. Both hypo- and hyperphosphorylated states are required for the viral life cycle. The hyperphosphorylated form of NS5A is an inhibitor of viral replication. Involved in RNA-binding and especially in binding to the viral genome. Zinc is essential for RNA-binding. Participates in the viral particle production as a result of its interaction with the mature viral core protein. Its interaction with host VAPB may target the viral replication complex to vesicles. Down-regulates viral IRES translation initiation. Mediates interferon resistance, presumably by interacting with and inhibiting host EIF2AK2/PKR. Prevents BIN1-induced apoptosis. Acts as a transcriptional activator of some host genes important for viral replication when localized in the nucleus. Via the interaction with host PACSIN2, modulates lipid droplet formation in order to promote virion assembly. Modulates TNFRSF21/DR6 signaling pathway for viral propagation. In terms of biological role, RNA-dependent RNA polymerase that performs primer-template recognition and RNA synthesis during viral replication. Initiates RNA transcription/replication at a flavin adenine dinucleotide (FAD), resulting in a 5'- FAD cap on viral RNAs. In this way, recognition of viral 5' RNA by host pattern recognition receptors can be bypassed, thereby evading activation of antiviral pathways. The sequence is that of Genome polyprotein from Homo sapiens (Human).